The following is a 236-amino-acid chain: 7-cyano-7-deazaguanine synthase (236 aa).

21-31 (LSGGLDSATVL) contributes to the ATP binding site. Residues Cys-202, Cys-212, Cys-215, and Cys-218 each coordinate Zn(2+).

The protein belongs to the QueC family. Zn(2+) is required as a cofactor.

It catalyses the reaction 7-carboxy-7-deazaguanine + NH4(+) + ATP = 7-cyano-7-deazaguanine + ADP + phosphate + H2O + H(+). Its pathway is purine metabolism; 7-cyano-7-deazaguanine biosynthesis. Catalyzes the ATP-dependent conversion of 7-carboxy-7-deazaguanine (CDG) to 7-cyano-7-deazaguanine (preQ(0)). This is 7-cyano-7-deazaguanine synthase from Frankia casuarinae (strain DSM 45818 / CECT 9043 / HFP020203 / CcI3).